Consider the following 189-residue polypeptide: Large ribosomal subunit protein uL6 (189 aa).

This sequence belongs to the universal ribosomal protein uL6 family. As to quaternary structure, part of the 50S ribosomal subunit.

This protein binds to the 23S rRNA, and is important in its secondary structure. It is located near the subunit interface in the base of the L7/L12 stalk, and near the tRNA binding site of the peptidyltransferase center. The polypeptide is Large ribosomal subunit protein uL6 (Bacteroides fragilis (strain ATCC 25285 / DSM 2151 / CCUG 4856 / JCM 11019 / LMG 10263 / NCTC 9343 / Onslow / VPI 2553 / EN-2)).